We begin with the raw amino-acid sequence, 385 residues long: Acetate kinase (385 aa).

Asn-9 is a Mg(2+) binding site. Lys-16 contacts ATP. Substrate is bound at residue Arg-87. Asp-144 acts as the Proton donor/acceptor in catalysis. ATP contacts are provided by residues 202 to 206 (HLGSG) and 277 to 279 (DMR). Glu-373 provides a ligand contact to Mg(2+).

It belongs to the acetokinase family. In terms of assembly, homodimer. It depends on Mg(2+) as a cofactor. Mn(2+) is required as a cofactor.

The protein localises to the cytoplasm. The enzyme catalyses acetate + ATP = acetyl phosphate + ADP. It participates in metabolic intermediate biosynthesis; acetyl-CoA biosynthesis; acetyl-CoA from acetate: step 1/2. Its function is as follows. Catalyzes the formation of acetyl phosphate from acetate and ATP. Can also catalyze the reverse reaction. This is Acetate kinase from Rickettsia prowazekii (strain Madrid E).